A 243-amino-acid polypeptide reads, in one-letter code: Probable phosphatase CBO3379/CLC_3322 (243 aa).

His8, His10, His16, His41, Glu74, His102, His132, Asp192, and His194 together coordinate Zn(2+).

It belongs to the PHP family. Zn(2+) serves as cofactor.

The sequence is that of Probable phosphatase CBO3379/CLC_3322 from Clostridium botulinum (strain Hall / ATCC 3502 / NCTC 13319 / Type A).